Consider the following 228-residue polypeptide: 7-cyano-7-deazaguanine synthase (228 aa).

Residue 9–19 (LSGGPDSTTVL) participates in ATP binding. Zn(2+) contacts are provided by Cys-193, Cys-203, Cys-206, and Cys-209.

The protein belongs to the QueC family. It depends on Zn(2+) as a cofactor.

It catalyses the reaction 7-carboxy-7-deazaguanine + NH4(+) + ATP = 7-cyano-7-deazaguanine + ADP + phosphate + H2O + H(+). Its pathway is purine metabolism; 7-cyano-7-deazaguanine biosynthesis. Its function is as follows. Catalyzes the ATP-dependent conversion of 7-carboxy-7-deazaguanine (CDG) to 7-cyano-7-deazaguanine (preQ(0)). The polypeptide is 7-cyano-7-deazaguanine synthase (Rickettsia peacockii (strain Rustic)).